The following is a 738-amino-acid chain: Flowering time control protein FCA (738 aa).

The tract at residues 1–118 is disordered; the sequence is MHRGGDRSTD…RGDHSDHDNR (118 aa). Composition is skewed to gly residues over residues 52-70 and 81-98; these read RGGG…GGGR and SGGG…GEPG. Positions 109–118 are enriched in basic and acidic residues; it reads RGDHSDHDNR. 2 RRM domains span residues 122-203 and 213-293; these read VKLF…YADG and HKLF…FADP. Disordered stretches follow at residues 292–414 and 566–594; these read DPKR…GHHL and QQSN…AIIP. The segment covering 301 to 311 has biased composition (gly residues); it reads SRGGPAFGGPG. Residues 342 to 358 show a composition bias toward polar residues; it reads HPSSPRSAPHQFNNFGS. Residues 368–377 are compositionally biased toward low complexity; it reads TVTSTTDTAT. Polar residues-rich tracts occupy residues 383-401 and 575-594; these read FSGN…SSHM and PTQG…AIIP. Positions 609-642 constitute a WW domain; sequence VPLTCNWTEHTSPEGFKYYYNSITRESKWDKPEE. The segment at 670–738 is disordered; it reads MQQLQSPPQA…QSAQERAWKS (69 aa). Low complexity predominate over residues 683–706; that stretch reads PAMQPVQQIPQAQQGQQQMQMKQQ. Residues 723-732 are compositionally biased toward polar residues; it reads RIQQGIQSAQ.

Interacts with FY. Binds to SF1, FIK, RPRD1B, Os09g0509000/LOC_Os09g33480 and MADS8. As to expression, mostly expressed in young flowers (panicles) and stems, and also present in young seedlings leaves and roots.

The protein localises to the nucleus. Plays a major role in the promotion of the transition of the vegetative meristem to reproductive development. Required for RNA-mediated chromatin silencing of a range of loci in the genome. Cotranscriptionally recognizes aberrant RNA and marks it for silencing. Controls alternative cleavage and polyadenylation on pre-mRNAs and antisense RNAs. Regulates flowering time, seed size and cell volume, probably via the modulation of cell size. In Oryza sativa subsp. japonica (Rice), this protein is Flowering time control protein FCA.